The following is a 74-amino-acid chain: Cytochrome c oxidase copper chaperone 1 (74 aa).

The interval Met-1 to Lys-30 is disordered. Cu cation is bound by residues Cys-34 and Cys-35. The region spanning Cys-34 to Val-74 is the CHCH domain. 2 short sequence motifs (cx9C motif) span residues Cys-37–Cys-47 and Cys-56–Cys-66. 2 disulfides stabilise this stretch: Cys-37–Cys-66 and Cys-47–Cys-56.

This sequence belongs to the COX17 family.

The protein resides in the mitochondrion intermembrane space. Its function is as follows. Copper chaperone for cytochrome c oxidase (COX). Binds 2 copper ions and delivers them to the Cu(A) site of COX. Can complement the yeast mutant cox17. The chain is Cytochrome c oxidase copper chaperone 1 (COX17-1) from Arabidopsis thaliana (Mouse-ear cress).